The following is a 493-amino-acid chain: MSELTSLTIAEAREKLRAKEITAIELTEAYISAIDAANERLNAYVKVTPDLARVMARKSDERIAAGTAGELEGIPLGIKDLFATVGVHTQACSHILDGFEPRYESTVTQNLWDDGAVMLGKLNMDEFAMGSSNETSYYGPVINPWRAEGSNQQLVPGGSSGGSAAAVAAHLCAGATATDTGGSIRQPAAFTGTVGIKPTYGRCSRWGTVAFASSLDQAGPIARDVRDAAILLKSMASVDAKDTTSVDLPVPDYEAVLGQSLKGMKIGIPNEYRVDGMPEEIETLWRQGIAWLKDAGADIVDISLPHTKYALPAYYIVAPAEASSNLARYDGVRYGLRVDGKDIVDMYEKTRAAGFGKEVKRRIMIGTYVLSAGYYDAYYIRAQKVRTLIKRDFELAFDAGVDAILTPATPSSAFGVADENLAADPVKMYLNDIFTVTVNMAGLPGIAVPAGLDQKGLPLGLQLIGKAFDEETLFKTAYVIEQAAGKFTPAKWW.

Residues lysine 79 and serine 159 each act as charge relay system in the active site. Serine 183 functions as the Acyl-ester intermediate in the catalytic mechanism.

This sequence belongs to the amidase family. GatA subfamily. Heterotrimer of A, B and C subunits.

The enzyme catalyses L-glutamyl-tRNA(Gln) + L-glutamine + ATP + H2O = L-glutaminyl-tRNA(Gln) + L-glutamate + ADP + phosphate + H(+). Allows the formation of correctly charged Gln-tRNA(Gln) through the transamidation of misacylated Glu-tRNA(Gln) in organisms which lack glutaminyl-tRNA synthetase. The reaction takes place in the presence of glutamine and ATP through an activated gamma-phospho-Glu-tRNA(Gln). This Rhizobium etli (strain ATCC 51251 / DSM 11541 / JCM 21823 / NBRC 15573 / CFN 42) protein is Glutamyl-tRNA(Gln) amidotransferase subunit A.